A 214-amino-acid polypeptide reads, in one-letter code: Tungstate uptake system ATP-binding protein TupC (214 aa).

The region spanning 3–214 (ITVSNLKKSY…GRVGEADGFF (212 aa)) is the ABC transporter domain. Residue 35–42 (GPNGAGKT) coordinates ATP.

The protein belongs to the ABC transporter superfamily. The complex is composed of two ATP-binding proteins (TupC), two transmembrane proteins (TupB) and a solute-binding protein (TupA).

It catalyses the reaction tungstate(in) + ATP + H2O = tungstate(out) + ADP + phosphate + H(+). In terms of biological role, part of an ABC transporter complex involved in tungstate uptake. Probably responsible for energy coupling to the transport system. In Peptoclostridium acidaminophilum (Eubacterium acidaminophilum), this protein is Tungstate uptake system ATP-binding protein TupC.